Here is a 47-residue protein sequence, read N- to C-terminus: Potamin-1 (47 aa).

Intrachain disulfides connect C3–C40, C6–C24, and C7–C36.

In terms of biological role, inhibitor of serine proteases chymotrypsin, papain and trypsin. Has strong antifungal activity against C.albicans and R.solani. Has antibacterial activity against the Gram-positive bacterium C.michiganense, but lacks antibacterial activity against the Gram-positive bacterium S.aureus. Lacks hemolytic activity against human erythrocytes. In Solanum tuberosum (Potato), this protein is Potamin-1.